A 670-amino-acid chain; its full sequence is Glycine--tRNA ligase beta subunit (670 aa).

This sequence belongs to the class-II aminoacyl-tRNA synthetase family. As to quaternary structure, tetramer of two alpha and two beta subunits.

The protein resides in the cytoplasm. The catalysed reaction is tRNA(Gly) + glycine + ATP = glycyl-tRNA(Gly) + AMP + diphosphate. The sequence is that of Glycine--tRNA ligase beta subunit from Thermotoga neapolitana (strain ATCC 49049 / DSM 4359 / NBRC 107923 / NS-E).